The sequence spans 290 residues: Ribosomal RNA small subunit methyltransferase H (290 aa).

Residues 35 to 37 (GGH), Asp54, Phe81, Asp97, and Gln104 each bind S-adenosyl-L-methionine.

It belongs to the methyltransferase superfamily. RsmH family.

The protein localises to the cytoplasm. It carries out the reaction cytidine(1402) in 16S rRNA + S-adenosyl-L-methionine = N(4)-methylcytidine(1402) in 16S rRNA + S-adenosyl-L-homocysteine + H(+). In terms of biological role, specifically methylates the N4 position of cytidine in position 1402 (C1402) of 16S rRNA. This Picosynechococcus sp. (strain ATCC 27264 / PCC 7002 / PR-6) (Agmenellum quadruplicatum) protein is Ribosomal RNA small subunit methyltransferase H.